Here is a 67-residue protein sequence, read N- to C-terminus: MAWKVSVDQDTCIGDAICASLCPDVFEMNDEGKAQPKVEVIEDEELYNCAKEAMEACPVSAITIEEA.

2 consecutive 4Fe-4S ferredoxin-type domains span residues 3–31 (WKVS…MNDE) and 36–67 (PKVE…IEEA). Positions 12, 15, and 18 each coordinate [4Fe-4S] cluster. The cysteines at positions 22 and 49 are disulfide-linked. A [4Fe-4S] cluster-binding site is contributed by C57.

Homodimer. [4Fe-4S] cluster is required as a cofactor. The cofactor is [3Fe-4S] cluster.

Ferredoxins are iron-sulfur proteins that transfer electrons in a wide variety of metabolic reactions. The protein is Ferredoxin (fdxA) of Pyrococcus furiosus (strain ATCC 43587 / DSM 3638 / JCM 8422 / Vc1).